We begin with the raw amino-acid sequence, 1514 residues long: Neurexin-1 (1514 aa).

An N-terminal signal peptide occupies residues 1-30 (MGTALVQRGGCCLLCLSLLLLGCWAELGSG). Residues 31-217 (LEFPGAEGQW…PPNSGGGSPC (187 aa)) form the Laminin G-like 1 domain. Residues 31–1438 (LEFPGAEGQW…EVIRESSSTT (1408 aa)) are Extracellular-facing. Residues N125 and N190 are each glycosylated (N-linked (GlcNAc...) asparagine). The interval 197-221 (VDGGEVKLDDEPPNSGGGSPCEAGE) is disordered. The EGF-like 1 domain occupies 219–256 (AGEEGEGGVCLNGGVCSVVDDQAVCDCSRTGFRGKDCS). Cystine bridges form between C228–C243 and C245–C255. 2 Laminin G-like domains span residues 283-480 (IATF…AFKC) and 487-679 (DPIT…KPSC). Ca(2+) is bound by residues D329, L346, and M414. 5 disulfides stabilise this stretch: C444–C480, C650–C679, C687–C698, C692–C707, and C709–C719. The region spanning 683-720 (TAKPCLSNPCKNNGMCRDGWNRYVCDCSGTGYLGRSCE) is the EGF-like 2 domain. Laminin G-like domains follow at residues 725–898 (VLSY…IDYC) and 912–1087 (DPVT…ERGC). Ca(2+) is bound by residues D772 and L789. N-linked (GlcNAc...) asparagine glycosylation is present at N797. Residue R848 coordinates Ca(2+). Cystine bridges form between C890/C898, C1059/C1087, C1094/C1105, C1099/C1114, and C1116/C1126. Residues 1090-1127 (PSTTCQEDSCSNQGVCLQQWDGFSCDCSMTSFSGPLCN) form the EGF-like 3 domain. The Laminin G-like 6 domain maps to 1133 to 1331 (YIFSKGGGQI…DANIAIVGNV (199 aa)). Positions 1183 and 1200 each coordinate Ca(2+). The N-linked (GlcNAc...) asparagine glycan is linked to N1230. The Ca(2+) site is built by I1282 and N1284. Residue S1392 is glycosylated (O-linked (Xyl...) (heparan sulfate) serine). The tract at residues 1396–1427 (PSDDEDIDPCEPSSGGLANPTRVGGREPYPGS) is disordered. Residues 1439–1459 (GMVVGIVAAAALCILILLYAM) form a helical membrane-spanning segment. At 1460 to 1514 (YKYRNRDEGSYHVDESRNYISNSAQSNGAVVKEKQPSSAKSANKNKKNKDKEYYV) the chain is on the cytoplasmic side. Positions 1481–1507 (NSAQSNGAVVKEKQPSSAKSANKNKKN) are interaction with CASK. The interval 1481–1514 (NSAQSNGAVVKEKQPSSAKSANKNKKNKDKEYYV) is disordered.

It belongs to the neurexin family. In terms of assembly, interacts (via laminin G-like domain 2 and/or laminin G-like domain 6) with NLGN1 forming a heterotetramer, where one NLGN1 dimer interacts with one NRXN1 dimer. Also interacts (via laminin G-like domain 2 and/or laminin G-like domain 6) with NLGN2, NLGN3 and NLGN4L; interactions with NLGN1, NLGN2, NLGN3 and NLGN4L are calcium-dependent. Interacts (via cytoplasmic C-terminal region) with CASK (via the PDZ, SH3 and guanylate kinase-like domains). Interacts (via cytoplasmic C-terminus) with CASKIN1 and APBA1. Interacts (via laminin G-like domain 2) with NXPH1 and NXPH3. Alpha-type isoforms (neurexin-1-alpha) interact (via laminin G-like domain 2 and/or laminin G-like domain 6) with DAG1 (via alpha-dystroglycan chain). Interacts with LRRTM1, LRRTM2, LRRTM3 and LRRTM4. Interacts with SYT13 and SYTL1. Interacts with CBLN1, CBLN2 and, less avidly, with CBLN4. Interacts with CLSTN3. O-glycosylated; contains heparan sulfate. Heparan sulfate attachment is required for synapse development by mediating interactions with neuroligins and LRRTM2.

It is found in the presynaptic cell membrane. Functionally, cell surface protein involved in cell-cell-interactions, exocytosis of secretory granules and regulation of signal transmission. Function is isoform-specific. Alpha-type isoforms have a long N-terminus with six laminin G-like domains and play an important role in synaptic signal transmission. Alpha-type isoforms play a role in the regulation of calcium channel activity and Ca(2+)-triggered neurotransmitter release at synapses and at neuromuscular junctions. They play an important role in Ca(2+)-triggered exocytosis of secretory granules in pituitary gland. They may affect their functions at synapses and in endocrine cells via their interactions with proteins from the exocytotic machinery. Likewise, alpha-type isoforms play a role in regulating the activity of postsynaptic NMDA receptors, a subtype of glutamate-gated ion channels. Both alpha-type and beta-type isoforms may play a role in the formation or maintenance of synaptic junctions via their interactions (via the extracellular domains) with neuroligin family members, CBLN1 or CBLN2. In vitro, triggers the de novo formation of presynaptic structures. May be involved in specification of excitatory synapses. Alpha-type isoforms were first identified as receptors for alpha-latrotoxin from spider venom. This Mus musculus (Mouse) protein is Neurexin-1 (Nrxn1).